The sequence spans 126 residues: Protein ApaG (126 aa).

The ApaG domain maps to 2-126 (SALDDSIRVE…FRLALPGLLH (125 aa)).

This Shewanella sp. (strain ANA-3) protein is Protein ApaG.